A 163-amino-acid chain; its full sequence is Urease accessory protein UreE (163 aa).

Residues 144 to 163 (QPEPGAYGGSSAGSHDGHHH) form a disordered region.

It belongs to the UreE family.

It is found in the cytoplasm. Functionally, involved in urease metallocenter assembly. Binds nickel. Probably functions as a nickel donor during metallocenter assembly. The sequence is that of Urease accessory protein UreE from Aliivibrio fischeri (strain MJ11) (Vibrio fischeri).